A 323-amino-acid chain; its full sequence is Aspartate carbamoyltransferase catalytic subunit (323 aa).

2 residues coordinate carbamoyl phosphate: Arg71 and Thr72. Lys99 contributes to the L-aspartate binding site. Carbamoyl phosphate is bound by residues Arg121, His151, and Gln154. L-aspartate is bound by residues Arg184 and Arg239. Residues Gly280 and Pro281 each coordinate carbamoyl phosphate.

This sequence belongs to the aspartate/ornithine carbamoyltransferase superfamily. ATCase family. Heterododecamer (2C3:3R2) of six catalytic PyrB chains organized as two trimers (C3), and six regulatory PyrI chains organized as three dimers (R2).

The catalysed reaction is carbamoyl phosphate + L-aspartate = N-carbamoyl-L-aspartate + phosphate + H(+). It functions in the pathway pyrimidine metabolism; UMP biosynthesis via de novo pathway; (S)-dihydroorotate from bicarbonate: step 2/3. Its function is as follows. Catalyzes the condensation of carbamoyl phosphate and aspartate to form carbamoyl aspartate and inorganic phosphate, the committed step in the de novo pyrimidine nucleotide biosynthesis pathway. In Ralstonia nicotianae (strain ATCC BAA-1114 / GMI1000) (Ralstonia solanacearum), this protein is Aspartate carbamoyltransferase catalytic subunit.